A 655-amino-acid chain; its full sequence is p-hydroxybenzoic acid efflux pump subunit AaeB (655 aa).

The Periplasmic portion of the chain corresponds to 1–12 (MGIFSIANQHIR). The chain crosses the membrane as a helical span at residues 13–33 (FAVKLACAIVLALFIGFHFQL). Residues 34 to 37 (ETPR) are Cytoplasmic-facing. The chain crosses the membrane as a helical span at residues 38-58 (WAVLTAAIVAAGPAFAAGGEP). The Periplasmic portion of the chain corresponds to 59 to 68 (YSGAIRYRGM). Residues 69–89 (LRIIGTFIGCIAALIIIISMI) form a helical membrane-spanning segment. Over 90 to 92 (RAP) the chain is Cytoplasmic. The helical transmembrane segment at 93–113 (LLMILVCCVWVGFCTWISSLV) threads the bilayer. Residues 114–120 (RIENSYA) lie on the Periplasmic side of the membrane. A helical transmembrane segment spans residues 121–141 (WGLSGYTALIIVITIQTEPLL). Residues 142–151 (TPQFALERCS) are Cytoplasmic-facing. A helical membrane pass occupies residues 152–172 (EIVIGIGCAILADLLFSPRSI). Residues 173-369 (KQEVDRELDS…RTTLSCILGT (197 aa)) lie on the Periplasmic side of the membrane. Residues 370–390 (LFWLWTGWTSGNGEMVMIAVV) form a helical membrane-spanning segment. Over 391–406 (TSLAMRLPNPRMVCID) the chain is Cytoplasmic. A helical membrane pass occupies residues 407–427 (FIYGTLAALPLGLLYFLVIIP). Residues 428–430 (NTQ) are Periplasmic-facing. The chain crosses the membrane as a helical span at residues 431–451 (QSMLLLCLSLAVLGFFIGIEV). At 452 to 458 (QKRRLGS) the chain is on the cytoplasmic side. A helical transmembrane segment spans residues 459-479 (MGALASTINIIVLDNPMTFHF). Over 480–481 (SQ) the chain is Periplasmic. The helical transmembrane segment at 482-502 (FLDSALGQIVGCMLAFIVILL) threads the bilayer. The Cytoplasmic portion of the chain corresponds to 503–655 (VRDKSKDRTG…HKYQNALTDS (153 aa)).

This sequence belongs to the aromatic acid exporter ArAE (TC 2.A.85) family.

The protein resides in the cell inner membrane. Its function is as follows. Forms an efflux pump with AaeA. Could function as a metabolic relief valve, allowing to eliminate certain compounds when they accumulate to high levels in the cell. In Salmonella paratyphi A (strain ATCC 9150 / SARB42), this protein is p-hydroxybenzoic acid efflux pump subunit AaeB.